A 449-amino-acid chain; its full sequence is Exodeoxyribonuclease 7 large subunit (449 aa).

This sequence belongs to the XseA family. Heterooligomer composed of large and small subunits.

The protein resides in the cytoplasm. It carries out the reaction Exonucleolytic cleavage in either 5'- to 3'- or 3'- to 5'-direction to yield nucleoside 5'-phosphates.. Bidirectionally degrades single-stranded DNA into large acid-insoluble oligonucleotides, which are then degraded further into small acid-soluble oligonucleotides. The sequence is that of Exodeoxyribonuclease 7 large subunit from Lacticaseibacillus paracasei (strain ATCC 334 / BCRC 17002 / CCUG 31169 / CIP 107868 / KCTC 3260 / NRRL B-441) (Lactobacillus paracasei).